The following is a 123-amino-acid chain: Amoebiasin-2 (123 aa).

Residues 1 to 16 (MKQFIFFALLCTSTYA) form the signal peptide. The BC loop motif lies at 45–50 (NPSTGY). Residues 71–81 (EPHPSGMVGFP) carry the DE loop motif. The FG loop motif lies at 105–114 (PWEKGKEPLR).

It belongs to the protease inhibitor I42 family. As to quaternary structure, monomer. May form homodimer. Interacts with cysteine protease CP2. Interacts with cysteine protease CP5.

The protein resides in the cytoplasmic vesicle. It localises to the lysosome. The protein localises to the phagosome. Cysteine protease inhibitor. Inhibits cysteine proteases CP1, CP2 and to a lesser extent CP5. This is Amoebiasin-2 from Entamoeba histolytica (strain ATCC 30459 / HM-1:IMSS / ABRM).